Consider the following 377-residue polypeptide: Protein RecA (377 aa).

A compositionally biased stretch (polar residues) spans 1 to 13 (MSNEGKPLQSTES). Residues 1–20 (MSNEGKPLQSTESTKIDAKS) are disordered. ATP is bound at residue 82–89 (GPESSGKT). The tract at residues 346–377 (GSEVSANSMRPLASAARQASSRPKLSQVSANG) is disordered. A compositionally biased stretch (polar residues) spans 362–377 (RQASSRPKLSQVSANG).

It belongs to the RecA family.

Its subcellular location is the cytoplasm. Can catalyze the hydrolysis of ATP in the presence of single-stranded DNA, the ATP-dependent uptake of single-stranded DNA by duplex DNA, and the ATP-dependent hybridization of homologous single-stranded DNAs. It interacts with LexA causing its activation and leading to its autocatalytic cleavage. This is Protein RecA from Prochlorococcus marinus (strain NATL1A).